The following is a 101-amino-acid chain: Putative pterin-4-alpha-carbinolamine dehydratase (101 aa).

Belongs to the pterin-4-alpha-carbinolamine dehydratase family.

The enzyme catalyses (4aS,6R)-4a-hydroxy-L-erythro-5,6,7,8-tetrahydrobiopterin = (6R)-L-erythro-6,7-dihydrobiopterin + H2O. The sequence is that of Putative pterin-4-alpha-carbinolamine dehydratase (phhB) from Ralstonia nicotianae (strain ATCC BAA-1114 / GMI1000) (Ralstonia solanacearum).